The following is a 413-amino-acid chain: UPF0754 membrane protein PCC7424_0748 (413 aa).

A run of 2 helical transmembrane segments spans residues 3–23 (IALELSTIWTIALPPITGAII) and 391–411 (IVNLGGILGFFVGTIQTVILL).

The protein belongs to the UPF0754 family.

Its subcellular location is the cell inner membrane. The sequence is that of UPF0754 membrane protein PCC7424_0748 from Gloeothece citriformis (strain PCC 7424) (Cyanothece sp. (strain PCC 7424)).